A 486-amino-acid polypeptide reads, in one-letter code: Glutamyl-tRNA(Gln) amidotransferase subunit A (486 aa).

Catalysis depends on charge relay system residues Lys-76 and Ser-151. The active-site Acyl-ester intermediate is the Ser-175.

This sequence belongs to the amidase family. GatA subfamily. As to quaternary structure, heterotrimer of A, B and C subunits.

The enzyme catalyses L-glutamyl-tRNA(Gln) + L-glutamine + ATP + H2O = L-glutaminyl-tRNA(Gln) + L-glutamate + ADP + phosphate + H(+). Functionally, allows the formation of correctly charged Gln-tRNA(Gln) through the transamidation of misacylated Glu-tRNA(Gln) in organisms which lack glutaminyl-tRNA synthetase. The reaction takes place in the presence of glutamine and ATP through an activated gamma-phospho-Glu-tRNA(Gln). This is Glutamyl-tRNA(Gln) amidotransferase subunit A from Nitrosomonas eutropha (strain DSM 101675 / C91 / Nm57).